A 723-amino-acid chain; its full sequence is Homeobox protein HAT3.1 (723 aa).

A compositionally biased stretch (basic residues) spans Met1–Thr10. Disordered stretches follow at residues Met1 to Arg94 and Lys135 to Glu173. A compositionally biased stretch (polar residues) spans Arg11 to Asp23. The segment covering Leu58–Ser83 has biased composition (basic and acidic residues). A PHD-type zinc finger spans residues Asp265–Lys322. Disordered regions lie at residues Gly357–Arg628 and Val680–Lys723. Positions Leu365–Glu407 are enriched in acidic residues. Basic and acidic residues predominate over residues Glu417–Lys427. A compositionally biased stretch (acidic residues) spans Asp435–Lys453. Composition is skewed to basic and acidic residues over residues Arg518 to Asp530 and Asp547 to Asp556. The segment covering Lys580–Ala589 has biased composition (basic residues). Positions Ser614 to Pro673 form a DNA-binding region, homeobox. Over residues Val680–Glu690 the composition is skewed to basic and acidic residues. Over residues Val695–Thr705 the composition is skewed to polar residues.

This sequence belongs to the PHD-associated homeobox family. As to expression, primarily detected in root tissue.

Its subcellular location is the nucleus. In terms of biological role, binds only to large DNA fragments. Recognizes a DNA fragment carrying 8 copies of box7 motif of the light-induced cab-E promoter of Nicotiana plumbaginifolia. Also recognizes the box7m1 motif. This Arabidopsis thaliana (Mouse-ear cress) protein is Homeobox protein HAT3.1 (HAT3.1).